The chain runs to 529 residues: Mannuronan C5-epimerase (529 aa).

A signal peptide spans 1-30 (MGACAMNPQALKGSAMLAAAMLLASGAAMA). 6 PbH1 repeats span residues 229–256 (GTETYISNTKMASFGYANSKSYGVSISQ), 291–313 (TTGFVIKGNTYKDNIVYGIDPHD), 315–338 (SHGLIIADNTVYGTKKKHGIIISR), 340–362 (VNDSFIFNNRSYDNKLSGLVLDR), 364–386 (SVNNFVADNEFYRNHTDGITLYE), and 387–409 (SGDNLLWGNKVIANRRHGIRVRN). His-312 (proton acceptor) is an active-site residue.

Belongs to the D-mannuronate C5-epimerase family.

Its subcellular location is the periplasm. It carries out the reaction [(1-&gt;4)-beta-D-mannuronosyl](n) = [alginate](n). It participates in glycan biosynthesis; alginate biosynthesis. Its function is as follows. Catalyzes the epimerization of beta-D-mannuronate to alpha-L-guluronate during the synthesis of the linear polysaccharide alginate. In addition, is part of a periplasmic protein complex that protects alginate from degradation by AlgL by channeling the newly formed alginate polymer through a scaffold that transfers the alginate polymer through the periplasmic space to the outer membrane secretin AlgE. The polypeptide is Mannuronan C5-epimerase (Pseudomonas fluorescens).